Consider the following 578-residue polypeptide: Raftlin (578 aa).

G2 carries the N-myristoyl glycine lipid modification. C3 carries the S-palmitoyl cysteine lipid modification. Residues 169-184 show a composition bias toward polar residues; the sequence is VNSAGSSAPVSTANST. 3 disordered regions span residues 169–271, 449–525, and 551–578; these read VNSA…VHEE, FSRE…PGGL, and CTGH…VEEN. Phosphoserine occurs at positions 183, 199, and 220. Over residues 185–206 the composition is skewed to basic and acidic residues; that stretch reads EDARDAKNARGDHASLENEKPG. Basic residues predominate over residues 457–466; sequence RQMRKSKGKL. The span at 467-485 shows a compositional bias: basic and acidic residues; that stretch reads SARDKQQAEENEKNLEDQS. Position 505 is a phosphoserine (S505). 2 stretches are compositionally biased toward basic and acidic residues: residues 506–518 and 557–578; these read EEMK…DKGE and PGED…VEEN.

The protein belongs to the raftlin family. Interacts with TLR4; the interaction occurs in response to lipopolysaccharide stimulation. Interacts with CLTC; the interaction occurs in response to pathogens. Interacts with AP2A1 and AP2B1. Expressed in B-cells (at protein level). Expressed in dendritic cells and macrophages.

The protein resides in the cell membrane. It is found in the cytoplasm. It localises to the membrane raft. Its subcellular location is the endosome. The protein localises to the early endosome. Involved in protein trafficking via association with clathrin and AP2 complex. Upon bacterial lipopolysaccharide stimulation, mediates internalization of TLR4 to endosomes in dendritic cells and macrophages; and internalization of poly(I:C) to TLR3-positive endosomes in myeloid dendritic cells and epithelial cells; resulting in activation of TICAM1-mediated signaling and subsequent IFNB1 production. Involved in T-cell antigen receptor-mediated signaling by regulating tyrosine kinase LCK localization, T-cell dependent antibody production and cytokine secretion. May regulate B-cell antigen receptor-mediated signaling. May play a pivotal role in the formation and/or maintenance of lipid rafts. This chain is Raftlin (RFTN1), found in Homo sapiens (Human).